A 648-amino-acid chain; its full sequence is Biosynthetic arginine decarboxylase (648 aa).

K109 carries the post-translational modification N6-(pyridoxal phosphate)lysine. Substrate is bound at residue I291 to F301.

Belongs to the Orn/Lys/Arg decarboxylase class-II family. SpeA subfamily. Requires Mg(2+) as cofactor. The cofactor is pyridoxal 5'-phosphate.

The catalysed reaction is L-arginine + H(+) = agmatine + CO2. The protein operates within amine and polyamine biosynthesis; agmatine biosynthesis; agmatine from L-arginine: step 1/1. Its function is as follows. Catalyzes the biosynthesis of agmatine from arginine. In Prochlorococcus marinus (strain MIT 9312), this protein is Biosynthetic arginine decarboxylase.